A 46-amino-acid chain; its full sequence is Mu-segestritoxin-Sf1b (46 aa).

Cystine bridges form between Cys-3/Cys-19, Cys-10/Cys-22, Cys-18/Cys-42, and Cys-24/Cys-40. The tract at residues Arg-31–Trp-33 is keys region for toxin activity.

It belongs to the neurotoxin 16 (SFI) family. In terms of tissue distribution, expressed by the venom gland.

The protein resides in the secreted. Its function is as follows. Insecticidal toxin. Causes flaccid paralysis followed by death when injected into Heliothis virescens larvae. Does not induce any toxic effects when injected intravenously into adult mice at a dose of 1.25 mg/kg body weight. The polypeptide is Mu-segestritoxin-Sf1b (Segestria florentina (Tube-web spider)).